The sequence spans 263 residues: Acyl-[acyl-carrier-protein]--UDP-N-acetylglucosamine O-acyltransferase (263 aa).

The protein belongs to the transferase hexapeptide repeat family. LpxA subfamily. As to quaternary structure, homotrimer.

The protein localises to the cytoplasm. It catalyses the reaction a (3R)-hydroxyacyl-[ACP] + UDP-N-acetyl-alpha-D-glucosamine = a UDP-3-O-[(3R)-3-hydroxyacyl]-N-acetyl-alpha-D-glucosamine + holo-[ACP]. It functions in the pathway glycolipid biosynthesis; lipid IV(A) biosynthesis; lipid IV(A) from (3R)-3-hydroxytetradecanoyl-[acyl-carrier-protein] and UDP-N-acetyl-alpha-D-glucosamine: step 1/6. Its function is as follows. Involved in the biosynthesis of lipid A, a phosphorylated glycolipid that anchors the lipopolysaccharide to the outer membrane of the cell. This chain is Acyl-[acyl-carrier-protein]--UDP-N-acetylglucosamine O-acyltransferase, found in Xanthomonas oryzae pv. oryzae (strain PXO99A).